We begin with the raw amino-acid sequence, 38 residues long: CHH precursor-related peptide (38 aa).

The segment at 18–38 is disordered; that stretch reads GALEPSTPLGDLSGSLGHPVE.

As to expression, produced by the medulla terminalis X-organ in the eyestalks and transported to the sinus gland where it is stored and released.

It is found in the secreted. This Cancer pagurus (Rock crab) protein is CHH precursor-related peptide.